Reading from the N-terminus, the 424-residue chain is Methylenetetrahydrofolate--tRNA-(uracil-5-)-methyltransferase TrmFO 1 (424 aa).

8-13 (GAGLSG) is a binding site for FAD.

It belongs to the MnmG family. TrmFO subfamily. FAD is required as a cofactor.

It localises to the cytoplasm. The enzyme catalyses uridine(54) in tRNA + (6R)-5,10-methylene-5,6,7,8-tetrahydrofolate + NADH + H(+) = 5-methyluridine(54) in tRNA + (6S)-5,6,7,8-tetrahydrofolate + NAD(+). It catalyses the reaction uridine(54) in tRNA + (6R)-5,10-methylene-5,6,7,8-tetrahydrofolate + NADPH + H(+) = 5-methyluridine(54) in tRNA + (6S)-5,6,7,8-tetrahydrofolate + NADP(+). Its function is as follows. Catalyzes the folate-dependent formation of 5-methyl-uridine at position 54 (M-5-U54) in all tRNAs. This chain is Methylenetetrahydrofolate--tRNA-(uracil-5-)-methyltransferase TrmFO 1, found in Mycoplasma mycoides subsp. mycoides SC (strain CCUG 32753 / NCTC 10114 / PG1).